A 130-amino-acid polypeptide reads, in one-letter code: Small ribosomal subunit protein uS8 (130 aa).

The protein belongs to the universal ribosomal protein uS8 family. Part of the 30S ribosomal subunit.

Functionally, one of the primary rRNA binding proteins, it binds directly to 16S rRNA central domain where it helps coordinate assembly of the platform of the 30S subunit. The polypeptide is Small ribosomal subunit protein uS8 (Thermococcus gammatolerans (strain DSM 15229 / JCM 11827 / EJ3)).